Here is a 498-residue protein sequence, read N- to C-terminus: Myocyte-specific enhancer factor 2D homolog (498 aa).

An interaction with hdac9 region spans residues 1 to 100 (MGRKKIQIQR…KGFNGCDSPE (100 aa)). The MADS-box domain maps to 3-57 (RKKIQIQRITDERNRQVTFTKRKFGLMKKAYELSVLCDCEIALIIFNHSNKLFQY). A DNA-binding region (mef2-type) is located at residues 58 to 86 (ASTDMDKVLLKYTEYNEPHESRTNADIIE). 3 disordered regions span residues 173-215 (LTDP…NSNG), 243-267 (LGKV…NSRK), and 411-498 (SIKR…AWVT). A compositionally biased stretch (basic and acidic residues) spans 412-424 (IKREPASPNRERS). Composition is skewed to polar residues over residues 425 to 434 (TGTPLSCFSH) and 447 to 457 (DSLSSNASSFE).

Belongs to the MEF2 family. In terms of assembly, binds DNA as a multimer, probably as a dimer. Interacts with hdac9. As to expression, restricted to the somitic mesoderm of early embryos and to the body muscle (myotomes) of the tadpole. Expressed in all tissues examined in the adult.

Its subcellular location is the nucleus. Functionally, may regulate muscle-specific transcription in the embryo and may regulate transcription of a variety of cell types in the adult. It binds to the sequence 5'-CTA[TA]4TAR-3'. The protein is Myocyte-specific enhancer factor 2D homolog (mef2d) of Xenopus laevis (African clawed frog).